A 160-amino-acid polypeptide reads, in one-letter code: Vegetative-specific protein V4 (160 aa).

Repeat copies occupy residues 151 to 153 (NQP), 154 to 156 (NQP), and 157 to 159 (NQG). Residues 151–159 (NQPNQPNQG) are 3 X 3 AA tandem repeats of N-Q-[PG].

In terms of biological role, unknown. Its expression during growth is not required for growth but for the proper initiation of development, therefore playing a role in the transition from growth to development. The polypeptide is Vegetative-specific protein V4 (lmcB) (Dictyostelium discoideum (Social amoeba)).